The sequence spans 191 residues: Pyridoxal 5'-phosphate synthase subunit PdxT (191 aa).

Residue 52 to 54 coordinates L-glutamine; that stretch reads GES. The Nucleophile role is filled by C81. Residues R108 and 136-137 each bind L-glutamine; that span reads IR. Residues H172 and E174 each act as charge relay system in the active site.

It belongs to the glutaminase PdxT/SNO family. In terms of assembly, in the presence of PdxS, forms a dodecamer of heterodimers. Only shows activity in the heterodimer.

It carries out the reaction aldehydo-D-ribose 5-phosphate + D-glyceraldehyde 3-phosphate + L-glutamine = pyridoxal 5'-phosphate + L-glutamate + phosphate + 3 H2O + H(+). It catalyses the reaction L-glutamine + H2O = L-glutamate + NH4(+). It functions in the pathway cofactor biosynthesis; pyridoxal 5'-phosphate biosynthesis. Catalyzes the hydrolysis of glutamine to glutamate and ammonia as part of the biosynthesis of pyridoxal 5'-phosphate. The resulting ammonia molecule is channeled to the active site of PdxS. This is Pyridoxal 5'-phosphate synthase subunit PdxT from Actinobacillus pleuropneumoniae serotype 7 (strain AP76).